The chain runs to 628 residues: Monoterpene synthase like 1, chloroplastic (628 aa).

Mg(2+) is bound by residues aspartate 379, aspartate 383, and aspartate 531. The DDXXD motif motif lies at 379 to 383 (DDIYD).

This sequence belongs to the terpene synthase family. Tpsd subfamily. Requires Mg(2+) as cofactor. Mn(2+) is required as a cofactor.

It localises to the plastid. The protein localises to the chloroplast. It functions in the pathway terpene metabolism; oleoresin biosynthesis. It participates in secondary metabolite biosynthesis; terpenoid biosynthesis. In terms of biological role, monoterpene synthase (TPS) involved in the biosynthesis of monoterpene natural products included in conifer oleoresin secretions and volatile emissions; these compounds contribute to biotic and abiotic stress defense against herbivores and pathogens. In Pinus banksiana (Jack pine), this protein is Monoterpene synthase like 1, chloroplastic.